The sequence spans 118 residues: Protein Rev (118 aa).

Phosphoserine; by host CK2 is present on serine 5. The homomultimerization stretch occupies residues 18–26; that stretch reads LIKILYQSN. The interval 23–49 is disordered; it reads YQSNPPPSPEGTRQARRNRRRRWRARQ. A Nuclear localization signal and RNA-binding (RRE) motif is present at residues 34-50; that stretch reads TRQARRNRRRRWRARQR. Residues 36 to 49 show a composition bias toward basic residues; that stretch reads QARRNRRRRWRARQ. Positions 73-84 match the Nuclear export signal and binding to XPO1 motif; it reads LQLPPLERLNLN. Residues 89–118 are disordered; sequence CGASGTQGVGSPQISVESPTVLESGTEEQC. Phosphoserine; by host occurs at positions 92 and 99. A compositionally biased stretch (polar residues) spans 92-112; the sequence is SGTQGVGSPQISVESPTVLES.

It belongs to the HIV-1 REV protein family. Homomultimer; when bound to the RRE. Multimeric assembly is essential for activity and may involve XPO1. Binds to human KPNB1, XPO1, TNPO1, RANBP5 and IPO7. Interacts with the viral Integrase. Interacts with human KHDRBS1. Interacts with human NAP1; this interaction decreases Rev multimerization and stimulates its activity. Interacts with human DEAD-box helicases DDX3 and DDX24; these interactions may serve for viral RNA export to the cytoplasm and packaging, respectively. Interacts with human PSIP1; this interaction may inhibit HIV-1 DNA integration by promoting dissociation of the Integrase-LEDGF/p75 complex. In terms of processing, asymmetrically arginine dimethylated at one site by host PRMT6. Methylation impairs the RNA-binding activity and export of viral RNA from the nucleus to the cytoplasm. Phosphorylated by protein kinase CK2. Presence of, and maybe binding to the N-terminus of the regulatory beta subunit of CK2 is necessary for CK2-mediated Rev's phosphorylation.

It localises to the host nucleus. Its subcellular location is the host nucleolus. It is found in the host cytoplasm. In terms of biological role, escorts unspliced or incompletely spliced viral pre-mRNAs (late transcripts) out of the nucleus of infected cells. These pre-mRNAs carry a recognition sequence called Rev responsive element (RRE) located in the env gene, that is not present in fully spliced viral mRNAs (early transcripts). This function is essential since most viral proteins are translated from unspliced or partially spliced pre-mRNAs which cannot exit the nucleus by the pathway used by fully processed cellular mRNAs. Rev itself is translated from a fully spliced mRNA that readily exits the nucleus. Rev's nuclear localization signal (NLS) binds directly to KPNB1/Importin beta-1 without previous binding to KPNA1/Importin alpha-1. KPNB1 binds to the GDP bound form of RAN (Ran-GDP) and targets Rev to the nucleus. In the nucleus, the conversion from Ran-GDP to Ran-GTP dissociates Rev from KPNB1 and allows Rev's binding to the RRE in viral pre-mRNAs. Rev multimerization on the RRE via cooperative assembly exposes its nuclear export signal (NES) to the surface. Rev can then form a complex with XPO1/CRM1 and Ran-GTP, leading to nuclear export of the complex. Conversion from Ran-GTP to Ran-GDP mediates dissociation of the Rev/RRE/XPO1/RAN complex, so that Rev can return to the nucleus for a subsequent round of export. Beside KPNB1, also seems to interact with TNPO1/Transportin-1, RANBP5/IPO5 and IPO7/RANBP7 for nuclear import. The nucleoporin-like HRB/RIP is an essential cofactor that probably indirectly interacts with Rev to release HIV RNAs from the perinuclear region to the cytoplasm. The sequence is that of Protein Rev from Human immunodeficiency virus type 1 group M subtype D (isolate Z2/CDC-Z34) (HIV-1).